Consider the following 245-residue polypeptide: MADKKPAADNWPVVSGDYIVGDPESPVAVTTLASHNEDIPAAAGAAIAGPCKTENLGIEKVVANIISNPNIRFLILCGAEVQGHITGQSIQALHENGCDPEKKKITGATGAIPFVENIPMEGVERFQQQVELVDLIDNEDGGAITAKVKECIEKDPGAFEEDAMVIEVKEGDDDEDEGEEIRPISAETALLEARIRNIDTQVKLVGAVQRNMAGNYSGKVQGIMIGLIFTLVIGFLLLMAPLLGA.

At 1–222 the chain is on the cytoplasmic side; the sequence is MADKKPAADN…AGNYSGKVQG (222 aa). His84 serves as a coordination point for 5-hydroxybenzimidazolylcob(I)amide. Residues 223-243 form a helical membrane-spanning segment; it reads IMIGLIFTLVIGFLLLMAPLL. The Extracellular segment spans residues 244-245; it reads GA.

This sequence belongs to the MtrA family. As to quaternary structure, the complex is composed of 8 subunits; MtrA, MtrB, MtrC, MtrD, MtrE, MtrF, MtrG and MtrH. It depends on 5-hydroxybenzimidazolylcob(I)amide as a cofactor.

It localises to the cell membrane. It catalyses the reaction 5-methyl-5,6,7,8-tetrahydromethanopterin + coenzyme M + 2 Na(+)(in) = 5,6,7,8-tetrahydromethanopterin + methyl-coenzyme M + 2 Na(+)(out). It functions in the pathway one-carbon metabolism; methanogenesis from CO(2); methyl-coenzyme M from 5,10-methylene-5,6,7,8-tetrahydromethanopterin: step 2/2. Part of a complex that catalyzes the formation of methyl-coenzyme M and tetrahydromethanopterin from coenzyme M and methyl-tetrahydromethanopterin. This is an energy-conserving, sodium-ion translocating step. The sequence is that of Tetrahydromethanopterin S-methyltransferase subunit A 1 from Methanobrevibacter ruminantium (strain ATCC 35063 / DSM 1093 / JCM 13430 / OCM 146 / M1) (Methanobacterium ruminantium).